Consider the following 253-residue polypeptide: Succinate dehydrogenase [ubiquinone] iron-sulfur subunit, mitochondrial (253 aa).

Residues 23 to 114 enclose the 2Fe-2S ferredoxin-type domain; that stretch reads FKIYRWNPDK…TTKIYPLPHM (92 aa). [2Fe-2S] cluster contacts are provided by Cys74, Cys79, Cys82, and Cys94. A 4Fe-4S ferredoxin-type domain is found at 156–186; sequence DRKKLDGLYECILCACCSTSCPSYWWNQEEY. Residues Cys166, Cys169, and Cys172 each coordinate [4Fe-4S] cluster. Cys176 is a [3Fe-4S] cluster binding site. An a ubiquinone-binding site is contributed by Trp181. Residues Cys223 and Cys229 each coordinate [3Fe-4S] cluster. Residue Cys233 coordinates [4Fe-4S] cluster.

This sequence belongs to the succinate dehydrogenase/fumarate reductase iron-sulfur protein family. Component of complex II composed of four subunits: a flavoprotein (FP), an iron-sulfur protein (IP), and a cytochrome b composed of a large and a small subunit. [2Fe-2S] cluster serves as cofactor. The cofactor is [3Fe-4S] cluster. [4Fe-4S] cluster is required as a cofactor.

It is found in the mitochondrion inner membrane. It carries out the reaction a quinone + succinate = fumarate + a quinol. The protein operates within carbohydrate metabolism; tricarboxylic acid cycle; fumarate from succinate (eukaryal route): step 1/1. In terms of biological role, iron-sulfur protein (IP) subunit of succinate dehydrogenase (SDH) that is involved in complex II of the mitochondrial electron transport chain and is responsible for transferring electrons from succinate to ubiquinone (coenzyme Q). The chain is Succinate dehydrogenase [ubiquinone] iron-sulfur subunit, mitochondrial (SDH2) from Candida glabrata (strain ATCC 2001 / BCRC 20586 / JCM 3761 / NBRC 0622 / NRRL Y-65 / CBS 138) (Yeast).